The chain runs to 383 residues: MRLRKTGLLAPVNDIIDLPTPSNISYWWNFGSLLGLCLGIQILTGVLLAMHYRSDVSLAFSSVAHIVRDVNYGWILRYVHANGASLFFICVYCHIGRGLYYGSYSRVLTWIVGVLIYFIMMLTAFIGYVLPWGQMSFWGATVITNLVSAIPSVGGSIVEWIWGGFSVSNCTLNRFFSLHYLLPFVLVGLVLAHLLTLHEKGANNPLGVVSLSDRSTFHVYFTIKDILGFLILLGVFVIIGIEPRIETLLQDPENFIQANPLVTPVHIQPEWYFLFAYAILRSIPNKLGGVLALFASILVLLLMPILDRSKIRSLTFNPVAKFFFWFIVGDFFILTWIGSAPAGTEPYVLIGRIATIFYFGYFLVLVPLLGYLSNLFYEYNGTT.

A run of 4 helical transmembrane segments spans residues 30-50 (FGSLLGLCLGIQILTGVLLAM), 74-96 (WILRYVHANGASLFFICVYCHIG), 109-129 (TWIVGVLIYFIMMLTAFIGYV), and 175-195 (FFSLHYLLPFVLVGLVLAHLL). Histidine 80 and histidine 94 together coordinate heme b. Positions 179 and 193 each coordinate heme b. Position 198 (histidine 198) interacts with a ubiquinone. Helical transmembrane passes span 221 to 241 (FTIKDILGFLILLGVFVIIGI), 289 to 309 (GVLALFASILVLLLMPILDRS), 320 to 340 (AKFFFWFIVGDFFILTWIGSA), and 345 to 365 (EPYVLIGRIATIFYFGYFLVL).

It belongs to the cytochrome b family. In terms of assembly, the main subunits of complex b-c1 are: cytochrome b, cytochrome c1 and the Rieske protein. Heme b is required as a cofactor.

The protein resides in the mitochondrion inner membrane. Its function is as follows. Component of the ubiquinol-cytochrome c reductase complex (complex III or cytochrome b-c1 complex) that is part of the mitochondrial respiratory chain. The b-c1 complex mediates electron transfer from ubiquinol to cytochrome c. Contributes to the generation of a proton gradient across the mitochondrial membrane that is then used for ATP synthesis. The polypeptide is Cytochrome b (mt:Cyt-b) (Trichoplax adhaerens (Trichoplax reptans)).